Here is a 575-residue protein sequence, read N- to C-terminus: TOX high mobility group box family member 3 (575 aa).

2 disordered regions span residues 189–258 (LGGA…QKPV) and 516–575 (QQLQ…VSIF). Over residues 195–214 (SHTSPSPPASKSATPSPSSS) the composition is skewed to low complexity. Basic and acidic residues predominate over residues 222–238 (DANRAIGEKRTAPDSGK). A compositionally biased stretch (basic residues) spans 239–249 (KPKTPKKKKKK). Residues 254 to 322 (PQKPVSAYAL…EYLKALAAYR (69 aa)) constitute a DNA-binding region (HMG box). The span at 516-526 (QQLQHMQHQSQ) shows a compositional bias: low complexity. A compositionally biased stretch (polar residues) spans 527 to 541 (PSPRQHSPVTSQITS). Residues 548–575 (SPQPASQQHQPQIQSQTQTQVLPQVSIF) show a composition bias toward low complexity.

As to quaternary structure, homodimer. Interacts (via HGM box) with CITED1 (via C-terminus); the interaction increases estrogen-response element (ERE)-dependent transcription and protection against cell death. Interacts with CREB1 (phosphorylated form). Interacts with CREB1; the interaction is not depolarization dependent. Interacts with CREBBP (via C-terminus).

Its subcellular location is the nucleus. Its function is as follows. Transcriptional coactivator of the p300/CBP-mediated transcription complex. Activates transactivation through cAMP response element (CRE) sites. Protects against cell death by inducing antiapoptotic and repressing pro-apoptotic transcripts. Stimulates transcription from the estrogen-responsive or BCL-2 promoters. Required for depolarization-induced transcription activation of the C-FOS promoter in neurons. Associates with chromatin to the estrogen-responsive C3 promoter region. This is TOX high mobility group box family member 3 (Tox3) from Mus musculus (Mouse).